Consider the following 218-residue polypeptide: Large ribosomal subunit protein bL25 (218 aa).

Positions 187–218 (SATAAVEEAKEDGAPEESAQGQGAAEAQETGK) are disordered. Residues 202–218 (EESAQGQGAAEAQETGK) show a composition bias toward low complexity.

This sequence belongs to the bacterial ribosomal protein bL25 family. CTC subfamily. Part of the 50S ribosomal subunit; part of the 5S rRNA/L5/L18/L25 subcomplex. Contacts the 5S rRNA. Binds to the 5S rRNA independently of L5 and L18.

Its function is as follows. This is one of the proteins that binds to the 5S RNA in the ribosome where it forms part of the central protuberance. The protein is Large ribosomal subunit protein bL25 of Anaplasma marginale (strain Florida).